A 485-amino-acid polypeptide reads, in one-letter code: GTPase Obg (485 aa).

Residues 1-159 (MKFVDEVRIF…LTLRLELKLL (159 aa)) enclose the Obg domain. One can recognise an OBG-type G domain in the interval 160–332 (ADVGLLGFPN…LMDSVAEVLF (173 aa)). GTP-binding positions include 166–173 (GFPNAGKS), 191–195 (FTTLV), 213–216 (DIPG), 284–287 (NKLD), and 313–315 (SCA). Residues S173 and T193 each coordinate Mg(2+). Composition is skewed to low complexity over residues 367 to 385 (AGAAAATKSATKKSAAAKK), 394 to 428 (RKAGAVAKTSAARKAGTAAAKKAPARKSGTAPVKK), 437 to 446 (RKSGTAPAKK), and 455 to 474 (RKSGSSGKAAAKKASAATKR). A disordered region spans residues 367-485 (AGAAAATKSA…PARKSGGGRS (119 aa)).

This sequence belongs to the TRAFAC class OBG-HflX-like GTPase superfamily. OBG GTPase family. Monomer. Mg(2+) is required as a cofactor.

The protein resides in the cytoplasm. In terms of biological role, an essential GTPase which binds GTP, GDP and possibly (p)ppGpp with moderate affinity, with high nucleotide exchange rates and a fairly low GTP hydrolysis rate. Plays a role in control of the cell cycle, stress response, ribosome biogenesis and in those bacteria that undergo differentiation, in morphogenesis control. In Myxococcus xanthus (strain DK1622), this protein is GTPase Obg.